The chain runs to 88 residues: UPF0495 protein DEHA2C16280g (88 aa).

Residues 25-47 (YPLFAAMGVAVASGCFFTYRHFA) traverse the membrane as a helical segment.

The protein belongs to the UPF0495 family.

Its subcellular location is the membrane. The protein is UPF0495 protein DEHA2C16280g of Debaryomyces hansenii (strain ATCC 36239 / CBS 767 / BCRC 21394 / JCM 1990 / NBRC 0083 / IGC 2968) (Yeast).